Reading from the N-terminus, the 427-residue chain is MECFKRLTTVFFTVKLVQYLLVYFAPGQFDTSTPLFLEKYQPLQPEKWYHKLLSWDSVYFVKNGLQAVTHTNAYGYVSLPEYEHEWMFSPFVWSQTLKTAGGATLRNWAAPIDTLLVRATLLNLVLHYVSVWLLYALTLRTFPKNRELAYKTSLLFILSSAAGFLLAPYSEPLSFAFSFLGMLLRMLAVEHNVYGGITLAWYNWLPYTLSGICFSVAAANRPNCVLLGVYYIYDVLKLVRQRNWVRAVLFPCIAGSMMLGIFAYMHYYLPSVVFCPERESWCKHSLPWIHIPYKSFYSFVQGYYWRNGFLNYWTWNNVPNFLFALPNLVILWYSTVYFSYQYPLESIRPLVYITRALLLIITFFAHVQIINRISSFIPLHLWYLSDRMIKTTGEAKGDDRLVYLYVNWLILWIPLQTVLFACFLPPA.

8 helical membrane-spanning segments follow: residues Leu7–Gly27, Ala119–Leu139, Phe164–Leu184, Ile197–Ala217, Ala247–Tyr267, Val318–Phe338, Leu350–Ile370, and Leu404–Leu424.

The protein belongs to the PIGV family.

It is found in the endoplasmic reticulum membrane. Its pathway is glycolipid biosynthesis; glycosylphosphatidylinositol-anchor biosynthesis. In terms of biological role, mannosyltransferase involved in glycosylphosphatidylinositol-anchor biosynthesis. Transfers the second mannose to the glycosylphosphatidylinositol during GPI precursor assembly. This is GPI mannosyltransferase 2 (GPI18) from Eremothecium gossypii (strain ATCC 10895 / CBS 109.51 / FGSC 9923 / NRRL Y-1056) (Yeast).